The sequence spans 586 residues: Potassium-transporting ATPase potassium-binding subunit (586 aa).

12 consecutive transmembrane segments (helical) span residues 11–31, 67–87, 136–156, 179–199, 279–299, 306–326, 351–371, 381–401, 403–423, 442–462, 507–527, and 551–571; these read LFLV…AKVF, AVAV…ILML, GLAV…IAVI, LYVL…QGVI, VEIF…GVMV, WAIL…LQGV, FGLA…CGAV, LGGM…GGVG, GLYT…LMIG, IITV…AMIT, ILGS…VLAM, and FALW…FPAL.

This sequence belongs to the KdpA family. In terms of assembly, the system is composed of three essential subunits: KdpA, KdpB and KdpC.

It is found in the cell inner membrane. In terms of biological role, part of the high-affinity ATP-driven potassium transport (or Kdp) system, which catalyzes the hydrolysis of ATP coupled with the electrogenic transport of potassium into the cytoplasm. This subunit binds the periplasmic potassium ions and delivers the ions to the membrane domain of KdpB through an intramembrane tunnel. This is Potassium-transporting ATPase potassium-binding subunit from Geobacter metallireducens (strain ATCC 53774 / DSM 7210 / GS-15).